A 425-amino-acid chain; its full sequence is UDP-N-acetylglucosamine 1-carboxyvinyltransferase (425 aa).

22-23 (KN) contacts phosphoenolpyruvate. Arginine 91 contacts UDP-N-acetyl-alpha-D-glucosamine. Cysteine 115 acts as the Proton donor in catalysis. Residue cysteine 115 is modified to 2-(S-cysteinyl)pyruvic acid O-phosphothioketal. Residues 120 to 124 (RPIDL), aspartate 305, and valine 327 contribute to the UDP-N-acetyl-alpha-D-glucosamine site.

Belongs to the EPSP synthase family. MurA subfamily.

The protein localises to the cytoplasm. The catalysed reaction is phosphoenolpyruvate + UDP-N-acetyl-alpha-D-glucosamine = UDP-N-acetyl-3-O-(1-carboxyvinyl)-alpha-D-glucosamine + phosphate. It functions in the pathway cell wall biogenesis; peptidoglycan biosynthesis. Functionally, cell wall formation. Adds enolpyruvyl to UDP-N-acetylglucosamine. In Coprothermobacter proteolyticus (strain ATCC 35245 / DSM 5265 / OCM 4 / BT), this protein is UDP-N-acetylglucosamine 1-carboxyvinyltransferase.